A 41-amino-acid chain; its full sequence is Entericidin A (41 aa).

An N-terminal signal peptide occupies residues 1–18 (MMKRLIVLVLLASTLLTG). The N-palmitoyl cysteine moiety is linked to residue C19. C19 carries S-diacylglycerol cysteine lipidation.

Belongs to the EcnA/EcnB lipoprotein family.

The protein localises to the cell membrane. Acts as antidote to the effect of entericidin B. This is Entericidin A (ecnA) from Escherichia coli O157:H7.